The following is a 75-amino-acid chain: U6-lycotoxin-Ls1f (75 aa).

Positions 1-21 (MKLLLFTALVLVVISLVEVEA) are cleaved as a signal peptide. Positions 22-25 (ENER) are excised as a propeptide.

Belongs to the neurotoxin 19 (CSTX) family. 06 (U6-Lctx) subfamily. In terms of processing, contains 4 disulfide bonds. Expressed by the venom gland.

The protein resides in the secreted. The polypeptide is U6-lycotoxin-Ls1f (Lycosa singoriensis (Wolf spider)).